Reading from the N-terminus, the 435-residue chain is MQGMKKLFIETLGCAMNSRDSEHMIAELSEKEGYETTNDLSSADLIIINTCSVREKPVAKLFSELGVFNKRKKEGAKIGVCGCTASHLGEEIIKRAPYVSFVLGARNVSKISEVLHKERAVEIDINYDESEFAFNDFRTSPYKAYINISIGCDKSCTYCIVPKTRGEEISIPTELILREAQKAVKGGAKEIFLLGQNVNNYGRRFSGEHEKVSFSELLRRLSKIDALERIRFTSPHPFHMDDEFIEEFSSNPKICKSMHMPLQSGSSKVLKDMKRGYTKEWFLNRVQKLRAMSPDVSISTDIIVAFPGESDEDFEETLSIMREVKFDQIFSFKYSPRPETEAEHFTNIVDEDVASSRLTTLQNLAVNILDEKNKTHLGKIYRVYFEDLNQDYYASGRSDNNLLIKVKGSDELLGEFRDVKITDIGRTILSGEIVG.

The region spanning 5–120 (KKLFIETLGC…ISEVLHKERA (116 aa)) is the MTTase N-terminal domain. Residues Cys14, Cys51, Cys83, Cys152, Cys156, and Cys159 each coordinate [4Fe-4S] cluster. In terms of domain architecture, Radical SAM core spans 138–372 (RTSPYKAYIN…NLAVNILDEK (235 aa)). The 62-residue stretch at 374–435 (KTHLGKIYRV…RTILSGEIVG (62 aa)) folds into the TRAM domain.

Belongs to the methylthiotransferase family. MiaB subfamily. In terms of assembly, monomer. The cofactor is [4Fe-4S] cluster.

The protein localises to the cytoplasm. The enzyme catalyses N(6)-dimethylallyladenosine(37) in tRNA + (sulfur carrier)-SH + AH2 + 2 S-adenosyl-L-methionine = 2-methylsulfanyl-N(6)-dimethylallyladenosine(37) in tRNA + (sulfur carrier)-H + 5'-deoxyadenosine + L-methionine + A + S-adenosyl-L-homocysteine + 2 H(+). Functionally, catalyzes the methylthiolation of N6-(dimethylallyl)adenosine (i(6)A), leading to the formation of 2-methylthio-N6-(dimethylallyl)adenosine (ms(2)i(6)A) at position 37 in tRNAs that read codons beginning with uridine. This Sulfurimonas denitrificans (strain ATCC 33889 / DSM 1251) (Thiomicrospira denitrificans (strain ATCC 33889 / DSM 1251)) protein is tRNA-2-methylthio-N(6)-dimethylallyladenosine synthase.